Consider the following 483-residue polypeptide: tRNA (guanine(37)-N(1))-methyltransferase (483 aa).

A disordered region spans residues 1 to 24 (MEEAATLQSLSISSSSPFPNNSSP). The span at 9 to 24 (SLSISSSSPFPNNSSP) shows a compositional bias: low complexity. S-adenosyl-L-methionine contacts are provided by residues His-252, 290–291 (DL), and Asn-379.

Belongs to the class I-like SAM-binding methyltransferase superfamily. TRM5/TYW2 family. As to quaternary structure, monomer.

The protein localises to the mitochondrion matrix. It is found in the nucleus. Its subcellular location is the cytoplasm. The catalysed reaction is guanosine(37) in tRNA + S-adenosyl-L-methionine = N(1)-methylguanosine(37) in tRNA + S-adenosyl-L-homocysteine + H(+). In terms of biological role, specifically methylates the N1 position of guanosine-37 in various cytoplasmic and mitochondrial tRNAs. Methylation is not dependent on the nature of the nucleoside 5' of the target nucleoside. This is the first step in the biosynthesis of wybutosine (yW), a modified base adjacent to the anticodon of tRNAs and required for accurate decoding. In Ajellomyces capsulatus (strain G186AR / H82 / ATCC MYA-2454 / RMSCC 2432) (Darling's disease fungus), this protein is tRNA (guanine(37)-N(1))-methyltransferase.